The primary structure comprises 316 residues: Olfactory receptor 10H3 (316 aa).

Residues 1-25 (MPGQNYRTISEFILSGFSAFPQQLL) lie on the Extracellular side of the membrane. A helical membrane pass occupies residues 26–46 (PVLFLLYLLMFLFTLLGNLLI). The Cytoplasmic segment spans residues 47–54 (MATVWIER). Residues 55–75 (RLHTPMYLFLCALSISEILFT) form a helical membrane-spanning segment. At 76-99 (VAITPRMLADLLFTHRSITFVACA) the chain is on the extracellular side. Cys98 and Cys190 are oxidised to a cystine. The chain crosses the membrane as a helical span at residues 100 to 120 (IQMFFSFMFGFTHSFLLMVMG). Residues 121–139 (YDHYVTICHPLHYNMLMSP) are Cytoplasmic-facing. The helical transmembrane segment at 140–160 (RGCAHLVAWTWAGGSVMGMMV) threads the bilayer. The Extracellular segment spans residues 161–197 (TMMVFHLTFCGSNVIHHFLCHVLSLLKLACGSKTSSV). The helical transmembrane segment at 198-218 (IMGVMLVCVTALIGCLFLIIL) threads the bilayer. Over 219–238 (SFVFIVAAILRIPSAEGRHK) the chain is Cytoplasmic. Residues 239–259 (TFSTCVSHLTVVVMHYSFASL) traverse the membrane as a helical segment. Residues 260–272 (IYLKPKGLHSMYS) are Extracellular-facing. A helical transmembrane segment spans residues 273 to 293 (DALMATTYTVFTPFLSPIIFS). Topologically, residues 294–316 (LRNKELKNAINKNFCRRFCPLSS) are cytoplasmic.

This sequence belongs to the G-protein coupled receptor 1 family.

It localises to the cell membrane. Its function is as follows. Odorant receptor. This chain is Olfactory receptor 10H3 (OR10H3), found in Homo sapiens (Human).